Reading from the N-terminus, the 275-residue chain is NH(3)-dependent NAD(+) synthetase (275 aa).

An ATP-binding site is contributed by 46–53 (GISGGQDS). D52 provides a ligand contact to Mg(2+). Deamido-NAD(+) is bound at residue R140. ATP is bound at residue T160. E165 is a Mg(2+) binding site. 2 residues coordinate deamido-NAD(+): K173 and D180. ATP-binding residues include K189 and T211. Deamido-NAD(+) is bound at residue 260 to 261 (HK).

The protein belongs to the NAD synthetase family. In terms of assembly, homodimer.

The catalysed reaction is deamido-NAD(+) + NH4(+) + ATP = AMP + diphosphate + NAD(+) + H(+). The protein operates within cofactor biosynthesis; NAD(+) biosynthesis; NAD(+) from deamido-NAD(+) (ammonia route): step 1/1. Catalyzes the ATP-dependent amidation of deamido-NAD to form NAD. Uses ammonia as a nitrogen source. The protein is NH(3)-dependent NAD(+) synthetase of Escherichia coli O17:K52:H18 (strain UMN026 / ExPEC).